The chain runs to 334 residues: Ornithine carbamoyltransferase (334 aa).

Carbamoyl phosphate is bound by residues 57–60 (STRT), Gln-84, Arg-108, and 135–138 (HPTQ). L-ornithine is bound by residues Asn-168, Asp-232, and 236 to 237 (SM). Carbamoyl phosphate contacts are provided by residues 274–275 (CL) and Arg-321.

Belongs to the aspartate/ornithine carbamoyltransferase superfamily. OTCase family.

The protein resides in the cytoplasm. It carries out the reaction carbamoyl phosphate + L-ornithine = L-citrulline + phosphate + H(+). It participates in amino-acid degradation; L-arginine degradation via ADI pathway; carbamoyl phosphate from L-arginine: step 2/2. Reversibly catalyzes the transfer of the carbamoyl group from carbamoyl phosphate (CP) to the N(epsilon) atom of ornithine (ORN) to produce L-citrulline. This chain is Ornithine carbamoyltransferase, found in Haemophilus influenzae (strain PittGG).